We begin with the raw amino-acid sequence, 128 residues long: Glycine cleavage system H protein (128 aa).

Positions S24–K106 constitute a Lipoyl-binding domain. Residue K65 is modified to N6-lipoyllysine.

Belongs to the GcvH family. As to quaternary structure, the glycine cleavage system is composed of four proteins: P, T, L and H. The cofactor is (R)-lipoate.

The glycine cleavage system catalyzes the degradation of glycine. The H protein shuttles the methylamine group of glycine from the P protein to the T protein. This Chromobacterium violaceum (strain ATCC 12472 / DSM 30191 / JCM 1249 / CCUG 213 / NBRC 12614 / NCIMB 9131 / NCTC 9757 / MK) protein is Glycine cleavage system H protein.